Consider the following 675-residue polypeptide: Protein kintoun (675 aa).

4 disordered regions span residues 98–131, 265–293, 310–340, and 509–659; these read ASKK…KQGA, AGEG…TAPP, EGGA…AVAK, and EAAH…AAPT. Basic and acidic residues predominate over residues 102 to 113; it reads QQQEQEKQEKEQ. The span at 279–293 shows a compositional bias: low complexity; the sequence is VPGVPDLPGAKTAPP. Low complexity predominate over residues 529–543; it reads AAAASSGAAPAPAAA. Acidic residues predominate over residues 544–553; that stretch reads SEEEEEEDKE. A compositionally biased stretch (low complexity) spans 564–577; the sequence is DPAAAAAAAGASSG. The segment covering 579-596 has biased composition (basic and acidic residues); sequence ELTENERKWRELHARQQQ. Low complexity-rich tracts occupy residues 604-617 and 628-659; these read AAEA…AAAE and VAQG…AAPT.

The protein belongs to the PIH1 family. Kintoun subfamily.

It localises to the cytoplasm. In terms of biological role, required for cytoplasmic pre-assembly of axonemal dyneins, thereby playing a central role in motility in cilia and flagella. Involved in pre-assembly of dynein arm complexes in the cytoplasm before intraflagellar transport loads them for the ciliary compartment. The sequence is that of Protein kintoun (pf13) from Chlamydomonas reinhardtii (Chlamydomonas smithii).